The chain runs to 513 residues: ATP synthase subunit alpha (513 aa).

Position 169–176 (169–176 (GDRQCGKT)) interacts with ATP.

Belongs to the ATPase alpha/beta chains family. F-type ATPases have 2 components, CF(1) - the catalytic core - and CF(0) - the membrane proton channel. CF(1) has five subunits: alpha(3), beta(3), gamma(1), delta(1), epsilon(1). CF(0) has three main subunits: a(1), b(2) and c(9-12). The alpha and beta chains form an alternating ring which encloses part of the gamma chain. CF(1) is attached to CF(0) by a central stalk formed by the gamma and epsilon chains, while a peripheral stalk is formed by the delta and b chains.

The protein resides in the cell inner membrane. The enzyme catalyses ATP + H2O + 4 H(+)(in) = ADP + phosphate + 5 H(+)(out). Its function is as follows. Produces ATP from ADP in the presence of a proton gradient across the membrane. The alpha chain is a regulatory subunit. The chain is ATP synthase subunit alpha from Burkholderia orbicola (strain AU 1054).